A 403-amino-acid polypeptide reads, in one-letter code: Putative gustatory receptor 98b (403 aa).

Residues 1 to 11 (MVAQKSRLLAR) are Cytoplasmic-facing. A helical membrane pass occupies residues 12–32 (AFPYLDIFSVFALTPPPQSFG). The Extracellular segment spans residues 33–48 (HTPHRRLRWYLMTGYV). The helical transmembrane segment at 49-69 (FYATAILATVFIVSYFNIIAI) threads the bilayer. At 70 to 83 (DEEVLEYNVSDFTR) the chain is on the cytoplasmic side. The helical transmembrane segment at 84-104 (VMGNIQKSLYSIMAIANHLNM) threads the bilayer. Residues 105-144 (LINYRRLGGIYKDIADLEMDMDEASQCFGGQRQRFSFRFR) are Extracellular-facing. The helical transmembrane segment at 145–165 (MALCVGVWMILMVGSMPRLTM) threads the bilayer. The Cytoplasmic portion of the chain corresponds to 166 to 191 (TAMGPFVSTLLKILTEFVMIMQQLKS). The helical transmembrane segment at 192-212 (LEYCVFVLIIYELVLRLRRTL) threads the bilayer. Over 213–259 (SQLQEEFQDCEQQDMLQALCVALKRNQLLLGRIWRLEGDVGSYFTPT) the chain is Extracellular. Residues 260-280 (MLLLFLYNGLTILHMVNWAYI) form a helical membrane-spanning segment. The Cytoplasmic portion of the chain corresponds to 281–365 (NKFLYDSCCQ…LRFTCGGLFD (85 aa)). Residues 366-386 (INLKYFGGLLVTIFGYIIILI) form a helical membrane-spanning segment. The Extracellular portion of the chain corresponds to 387-403 (QFKVQAIAANRYKKVVN).

The protein belongs to the insect chemoreceptor superfamily. Gustatory receptor (GR) family. Gr2a subfamily.

The protein localises to the cell membrane. In terms of biological role, probable gustatory receptor which mediates acceptance or avoidance behavior, depending on its substrates. The chain is Putative gustatory receptor 98b (Gr98b) from Drosophila melanogaster (Fruit fly).